A 389-amino-acid chain; its full sequence is Major outer membrane porin (389 aa).

The N-terminal stretch at 1 to 22 is a signal peptide; that stretch reads MKKLLKSALLFAATGSALSLQA.

This sequence belongs to the chlamydial porin (CP) (TC 1.B.2) family. Part of a disulfide cross-linked outer membrane complex (COMC) composed of the major outer membrane porin (MOMP), the small cysteine-rich protein (OmcA) and the large cysteine-rich periplasmic protein (OmcB).

The protein resides in the cell outer membrane. Functionally, in elementary bodies (EBs, the infectious stage, which is able to survive outside the host cell) provides the structural integrity of the outer envelope through disulfide cross-links with the small cysteine-rich protein and the large cysteine-rich periplasmic protein. It has been described in publications as the Sarkosyl-insoluble COMC (Chlamydia outer membrane complex), and serves as the functional equivalent of peptidoglycan. In terms of biological role, permits diffusion of specific solutes through the outer membrane. This chain is Major outer membrane porin (ompA), found in Chlamydia abortus (strain DSM 27085 / S26/3) (Chlamydophila abortus).